The chain runs to 20 residues: Elastase (20 aa).

Residues 1-20 (VVGGEVARAHSWPWQISLQY) enclose the Peptidase S1 domain.

It belongs to the peptidase S1 family. Elastase subfamily.

Its function is as follows. Digests most rapidly at the C-terminal side of alanine residues, but also cleaves at valine and leucine residues. This is Elastase from Gadus morhua (Atlantic cod).